The following is a 164-amino-acid chain: MTPLRSGIVAAVAALIADQASKLWLLFVFDIGHRGAVRVTPFFDLVLAWNTGISYGWFQTDSPVGATILLAIKAGAVVLLAIWMARSQTRLATIGLGLIIGGAIGNAIDRFAYGAVVDFVLFHVPLAGKTYSWYVFNLADVAIVAGVIALLYDSFLRTPAAKAP.

4 consecutive transmembrane segments (helical) span residues 8-28, 39-59, 64-84, and 91-111; these read IVAAVAALIADQASKLWLLFV, VTPFFDLVLAWNTGISYGWFQ, VGATILLAIKAGAVVLLAIWM, and LATIGLGLIIGGAIGNAIDRF. Residues Asp118 and Asp140 contribute to the active site. Residues 131 to 151 form a helical membrane-spanning segment; it reads YSWYVFNLADVAIVAGVIALL.

The protein belongs to the peptidase A8 family.

Its subcellular location is the cell inner membrane. It catalyses the reaction Release of signal peptides from bacterial membrane prolipoproteins. Hydrolyzes -Xaa-Yaa-Zaa-|-(S,diacylglyceryl)Cys-, in which Xaa is hydrophobic (preferably Leu), and Yaa (Ala or Ser) and Zaa (Gly or Ala) have small, neutral side chains.. The protein operates within protein modification; lipoprotein biosynthesis (signal peptide cleavage). This protein specifically catalyzes the removal of signal peptides from prolipoproteins. The polypeptide is Lipoprotein signal peptidase (Nitrobacter hamburgensis (strain DSM 10229 / NCIMB 13809 / X14)).